Here is a 914-residue protein sequence, read N- to C-terminus: Protein translocase subunit SecA (914 aa).

ATP contacts are provided by residues glutamine 87, 105 to 109 (GEGKT), and aspartate 508. The Zn(2+) site is built by cysteine 898, cysteine 900, cysteine 909, and histidine 910.

It belongs to the SecA family. As to quaternary structure, monomer and homodimer. Part of the essential Sec protein translocation apparatus which comprises SecA, SecYEG and auxiliary proteins SecDF-YajC and YidC. Zn(2+) is required as a cofactor.

It is found in the cell inner membrane. Its subcellular location is the cytoplasm. It catalyses the reaction ATP + H2O + cellular proteinSide 1 = ADP + phosphate + cellular proteinSide 2.. Its function is as follows. Part of the Sec protein translocase complex. Interacts with the SecYEG preprotein conducting channel. Has a central role in coupling the hydrolysis of ATP to the transfer of proteins into and across the cell membrane, serving both as a receptor for the preprotein-SecB complex and as an ATP-driven molecular motor driving the stepwise translocation of polypeptide chains across the membrane. This Xylella fastidiosa (strain M23) protein is Protein translocase subunit SecA.